The following is a 417-amino-acid chain: Spermidine/putrescine import ATP-binding protein PotA (417 aa).

The ABC transporter domain maps to I5 to V308. G37 to T44 is a binding site for ATP. An insert region spans residues D105 to K177.

This sequence belongs to the ABC transporter superfamily. Spermidine/putrescine importer (TC 3.A.1.11.1) family. In terms of assembly, the complex is composed of two ATP-binding proteins (PotA), two transmembrane proteins (PotB and PotC) and a solute-binding protein (PotD).

The protein resides in the cell membrane. It catalyses the reaction ATP + H2O + polyamine-[polyamine-binding protein]Side 1 = ADP + phosphate + polyamineSide 2 + [polyamine-binding protein]Side 1.. Part of the ABC transporter complex PotABCD involved in spermidine/putrescine import. Responsible for energy coupling to the transport system. The polypeptide is Spermidine/putrescine import ATP-binding protein PotA (Aster yellows witches'-broom phytoplasma (strain AYWB)).